Reading from the N-terminus, the 221-residue chain is Probable septum site-determining protein MinC (221 aa).

It belongs to the MinC family. As to quaternary structure, interacts with MinD and FtsZ.

Its function is as follows. Cell division inhibitor that blocks the formation of polar Z ring septums. Rapidly oscillates between the poles of the cell to destabilize FtsZ filaments that have formed before they mature into polar Z rings. Prevents FtsZ polymerization. The sequence is that of Probable septum site-determining protein MinC from Shewanella halifaxensis (strain HAW-EB4).